Reading from the N-terminus, the 164-residue chain is Sorting nexin-3 (164 aa).

Residues 1-26 (MSGKREFKSFGSTEETMFSQHHKIPS) are disordered. Over residues 10–26 (FGSTEETMFSQHHKIPS) the composition is skewed to polar residues. The PX domain occupies 40 to 163 (IEVRNPKTHV…IRFIEDDKFV (124 aa)). A 1,2-diacyl-sn-glycero-3-phospho-(1D-myo-inositol-3-phosphate) contacts are provided by R83, S85, K114, R120, and R129.

The protein belongs to the sorting nexin family.

It localises to the cytoplasm. It is found in the golgi apparatus membrane. Its subcellular location is the prevacuolar compartment membrane. Required for retention of late Golgi membrane proteins. Component of the retrieval machinery that functions by direct interaction with the cytosolic tails of certain TGN membrane proteins during the sorting/budding process at the prevacuolar compartment. Binds phosphatidylinositol 3-phosphate (PtdIns(P3)). In Candida glabrata (strain ATCC 2001 / BCRC 20586 / JCM 3761 / NBRC 0622 / NRRL Y-65 / CBS 138) (Yeast), this protein is Sorting nexin-3 (SNX3).